The following is a 349-amino-acid chain: ATP synthase subunit a-2 (349 aa).

A propeptide spanning residues 1–97 is cleaved from the precursor; it reads MERLTRLNHF…SNYMKLMEIP (97 aa). The next 7 membrane-spanning stretches (helical) occupy residues 118–138, 184–204, 213–233, 240–260, 280–300, 303–323, and 326–346; these read FSFT…LLLI, FFPC…QGMI, HFLI…IVGF, FFSF…LVLL, MMAG…MLCM, IFYF…TGLE, and VAIL…NDAI.

This sequence belongs to the ATPase A chain family. In terms of assembly, F-type ATPases have 2 components, CF(1) - the catalytic core - and CF(0) - the membrane proton channel. CF(1) has five subunits: alpha(3), beta(3), gamma(1), delta(1), epsilon(1). CF(0) has three main subunits: a, b and c.

The protein resides in the mitochondrion inner membrane. Functionally, mitochondrial membrane ATP synthase (F(1)F(0) ATP synthase or Complex V) produces ATP from ADP in the presence of a proton gradient across the membrane which is generated by electron transport complexes of the respiratory chain. F-type ATPases consist of two structural domains, F(1) - containing the extramembraneous catalytic core and F(0) - containing the membrane proton channel, linked together by a central stalk and a peripheral stalk. During catalysis, ATP synthesis in the catalytic domain of F(1) is coupled via a rotary mechanism of the central stalk subunits to proton translocation. Key component of the proton channel; it may play a direct role in the translocation of protons across the membrane. The chain is ATP synthase subunit a-2 (ATP6-2) from Arabidopsis thaliana (Mouse-ear cress).